An 870-amino-acid polypeptide reads, in one-letter code: Dynamin-2 (870 aa).

Positions 28–294 (HLDLPQIAVV…LTNHIRESLP (267 aa)) constitute a Dynamin-type G domain. A G1 motif region spans residues 38–45 (GGQSAGKS). GDP contacts are provided by Ser41, Gly43, Lys44, Ser45, Ser46, Arg59, and Gly60. Residues 64–66 (VTR) are G2 motif. The G3 motif stretch occupies residues 136 to 139 (DLPG). A G4 motif region spans residues 205–208 (TKLD). The GDP site is built by Lys206, Asp208, and Asp211. Tyr231 is modified (phosphotyrosine; by SRC). A G5 motif region spans residues 235-238 (VNRS). Asn236, Arg237, and Gln239 together coordinate GDP. Lys299 is subject to N6-acetyllysine. The region spanning 519–625 (LVIRRGWLTI…WKASFLRAGV (107 aa)) is the PH domain. Tyr597 is subject to Phosphotyrosine; by SRC. The residue at position 598 (Lys598) is an N6-acetyllysine. One can recognise a GED domain in the interval 653 to 744 (VETIRNLVDS…IIGDISTSTV (92 aa)). Residues 741 to 870 (TSTVSTPVPP…IRPAEPSLLD (130 aa)) form a disordered region. At Thr755 the chain carries Phosphothreonine. Positions 756–767 (WLQSASSHSPTP) are enriched in polar residues. Ser764 bears the Phosphoserine; by CDK1 mark. Over residues 796–806 (VPVGAAASFSA) the composition is skewed to low complexity. The segment covering 826 to 855 (PAPPQIPSRPVRIPPGIPPGVPSRRPPAAP) has biased composition (pro residues). At Ser848 the chain carries Phosphoserine; by GSK3-alpha.

It belongs to the TRAFAC class dynamin-like GTPase superfamily. Dynamin/Fzo/YdjA family. As to quaternary structure, oligomerizes into a helical polymer that self-assembles around the vesicle membrane, when associated to the menbrane through lipid binding. Interacts with SHANK1 and SHANK2. Interacts with SNX9. Interacts (via C-terminal proline-rich domain (PRD)) with SNX18 (via SH3 domain); this interaction regulates ATG9A and ATG16L1 trafficking from recycling endosomes to sites of autophagosome formation. Interacts with SNX33 (via SH3 domain). Interacts with MYO1E (via SH3 domain). Interacts with PSTPIP1 (via SH3 domain). Interacts with CTNND2. Interacts (via C-terminal proline-rich domain (PRD)) with BIN1 (via SH3 domain); this interaction allows the recruitment of DNM2 to the membrane tubules and inhibits self-assembly-stimulated GTPase activity on the membrane. Interacts with GABARAP, GABARAPL1 and GABARAPL2. Interacts with MAP1LC3B (the lipidate and non-lipidated LC3 form); this interaction mediates recycling endosome scission leading to autophagosome release. Interacts with ITSN1. Interacts (via C-terminal proline-rich domain (PRD)) with SH3BP4 (via SH3 domain); this interaction controls the GTPase activity and is prevented by EGFR-induced tyrosine phosphorylation of either DNM2 or SH3BP4. May interact with PIK3C3. May be a component of a complex composed of RAB5A (in GDP-bound form), DYN2 and PIK3C3. Interacts with SDC4; this interaction is markedly enhanced at focal ahesion site upon induction of focal adhesions and stress-fiber formation. Interacts with ACTN1. Interacts with CTTN; this interaction stimulates the intrinsic GTPase activity of DNM2 and stabilizes the association of DNM2 and actin filaments; in addition this interaction is stimulated by ligand binding to the receptor, leading to the recruitment of the DNM2-CTTN complex to the sequestered receptor-ligand complex to its internalization. Interacts with NOSTRIN (via SH3 domain); this interaction allows the recruitment of NOS3 to dynamin-positive structures. Interacts with TUBG1; this interaction may participate in centrosome cohesion. Phosphorylation at Ser-848 by GSK3-alpha relieves the inhibition of BIN1 and promotes endocytosis. Phosphorylation at Ser-764 by CDK1 is greatly increased upon mitotic entry. It regulates cytokinesis downstream of calcineurin, and does not affect clathrin-mediated endocytosis. Dephosphorylated by calcineurin/PP2 during cytokinesis in a Ca(2+)- and calmodulin-dependent manner. Phosphorylated on tyrosine residues by EGFR and after activation of SRC. Widely expressed. Expressed in skeletal muscle and the peripheral nerve.

The protein localises to the cytoplasm. The protein resides in the cytoskeleton. It localises to the cytoplasmic vesicle. It is found in the clathrin-coated vesicle. Its subcellular location is the cell projection. The protein localises to the uropodium. The protein resides in the endosome. It localises to the microtubule organizing center. It is found in the centrosome. Its subcellular location is the centriole. The protein localises to the recycling endosome. The protein resides in the phagocytic cup. It localises to the phagosome membrane. It is found in the podosome. Its subcellular location is the cell junction. The protein localises to the postsynaptic density. The protein resides in the synapse. It localises to the synaptosome. It is found in the midbody. Its subcellular location is the membrane. The protein localises to the clathrin-coated pit. The catalysed reaction is GTP + H2O = GDP + phosphate + H(+). Catalyzes the hydrolysis of GTP and utilizes this energy to mediate vesicle scission at plasma membrane during endocytosis and filament remodeling at many actin structures during organization of the actin cytoskeleton. Plays an important role in vesicular trafficking processes, namely clathrin-mediated endocytosis (CME), exocytic and clathrin-coated vesicle from the trans-Golgi network, and PDGF stimulated macropinocytosis. During vesicular trafficking process, associates to the membrane, through lipid binding, and self-assembles into ring-like structure through oligomerization to form a helical polymer around the vesicle membrane and leading to vesicle scission. Plays a role in organization of the actin cytoskeleton by mediating arrangement of stress fibers and actin bundles in podocytes. During organization of the actin cytoskeleton, self-assembles into ring-like structure that directly bundles actin filaments to form typical membrane tubules decorated with dynamin spiral polymers. Self-assembly increases GTPase activity and the GTP hydrolysis causes the rapid depolymerization of dynamin spiral polymers, and results in dispersion of actin bundles. Remodels, through its interaction with CTTN, bundled actin filaments in a GTPase-dependent manner and plays a role in orchestrating the global actomyosin cytoskeleton. The interaction with CTTN stabilizes the interaction of DNM2 and actin filaments and stimulates the intrinsic GTPase activity that results in actin filament-barbed ends and increases the sensitivity of filaments in bundles to the actin depolymerizing factor, CFL1. Plays a role in the autophagy process, by participating in the formation of ATG9A vesicles destined for the autophagosomes through its interaction with SNX18, by mediating recycling endosome scission leading to autophagosome release through MAP1LC3B interaction. Also regulates maturation of apoptotic cell corpse-containing phagosomes by recruiting PIK3C3 to the phagosome membrane. Also plays a role in cytokinesis. May participate in centrosome cohesion through its interaction with TUBG1. Plays a role in the regulation of neuron morphology, axon growth and formation of neuronal growth cones. Involved in membrane tubulation. This Homo sapiens (Human) protein is Dynamin-2.